A 203-amino-acid chain; its full sequence is Glutathione S-transferase (203 aa).

The region spanning 2–79 (PDYKVYYFNV…YLANQVGLAG (78 aa)) is the GST N-terminal domain. Glutathione is bound by residues Tyr-8, Trp-39, Lys-43, 49–51 (GQM), and 63–64 (QS). The GST C-terminal domain occupies 81–203 (DDWENLMIDT…YIAKRPITEV (123 aa)).

The protein belongs to the GST superfamily. Sigma family. As to quaternary structure, homodimer.

The enzyme catalyses RX + glutathione = an S-substituted glutathione + a halide anion + H(+). Conjugation of reduced glutathione to a wide number of exogenous and endogenous hydrophobic electrophiles. The chain is Glutathione S-transferase (GstS1) from Anopheles gambiae (African malaria mosquito).